The chain runs to 424 residues: MLDLNFVVQNLPSVIAKLEKRQQNFAYLNKLPLLAQQRKSLLLEIQDLRSQKNQSAKKVAQKANAKEDITLVLQDTNFLRDDLQKLEQKLKLKEQEIFDILSITPNLPHDSLPIGTNDKDNKELYCAGQIRTFAFTPKDHVYLAEKLDILDFKRASKISGSGFVVCKGLGARLERALIQFMMDLHNKKGYQEIIPPYIINEKSMFATGQLPKFEDEVYKLYNSKNNWYLNPTAEVPTINLHREEIFKPDTLPIKYVAYTTAFRQEAGSAGKDTRGIFRQHQFNKVELIQFCHPQNSYECLDQMLKDSEEVLKLLKLPYRVVLLSTGDLGFSMAKTYDLEVFLPSYNCYREIGSISNSCDFQARRANIKMKNPANNKNEYVHILNGSGLAVGRTVIAILENYQNQDGTITVPEVLQPYLGTDIIK.

232-234 (TAE) contacts L-serine. Position 263–265 (263–265 (RQE)) interacts with ATP. Glu286 contributes to the L-serine binding site. 350 to 353 (EIGS) is an ATP binding site. Ser386 is a binding site for L-serine.

Belongs to the class-II aminoacyl-tRNA synthetase family. Type-1 seryl-tRNA synthetase subfamily. As to quaternary structure, homodimer. The tRNA molecule binds across the dimer.

It is found in the cytoplasm. The catalysed reaction is tRNA(Ser) + L-serine + ATP = L-seryl-tRNA(Ser) + AMP + diphosphate + H(+). It carries out the reaction tRNA(Sec) + L-serine + ATP = L-seryl-tRNA(Sec) + AMP + diphosphate + H(+). It functions in the pathway aminoacyl-tRNA biosynthesis; selenocysteinyl-tRNA(Sec) biosynthesis; L-seryl-tRNA(Sec) from L-serine and tRNA(Sec): step 1/1. Functionally, catalyzes the attachment of serine to tRNA(Ser). Is also able to aminoacylate tRNA(Sec) with serine, to form the misacylated tRNA L-seryl-tRNA(Sec), which will be further converted into selenocysteinyl-tRNA(Sec). This is Serine--tRNA ligase from Onion yellows phytoplasma (strain OY-M).